Reading from the N-terminus, the 136-residue chain is Membrane-bound negative regulator YvrL (136 aa).

A run of 4 helical transmembrane segments spans residues leucine 18–leucine 38, alanine 46–phenylalanine 66, leucine 83–threonine 103, and leucine 106–isoleucine 126.

It is found in the cell membrane. Negatively regulates RNA polymerase sigma factor SigO-dependent transcription. Prevents the expression or secretion of OxdC under nonstress conditions. May act as an anti-sigma factor. This is Membrane-bound negative regulator YvrL (yvrL) from Bacillus subtilis (strain 168).